Consider the following 155-residue polypeptide: Phospholipase A2 A2-actitoxin-Ucs2a (155 aa).

An N-terminal signal peptide occupies residues 1-19 (MKNNIILVILLGISVFVDC). The propeptide occupies 20–42 (LPLNDQEEDKSLNAQESEVSAVQ). 6 disulfide bridges follow: cysteine 55–cysteine 118, cysteine 71–cysteine 87, cysteine 86–cysteine 143, cysteine 93–cysteine 136, cysteine 100–cysteine 129, and cysteine 122–cysteine 134. The Ca(2+) site is built by glycine 72 and glycine 74. Histidine 90 is an active-site residue. Aspartate 91 contributes to the Ca(2+) binding site. Residue aspartate 137 is part of the active site.

The protein belongs to the phospholipase A2 family. Ca(2+) serves as cofactor.

It localises to the secreted. It is found in the nematocyst. It carries out the reaction a 1,2-diacyl-sn-glycero-3-phosphocholine + H2O = a 1-acyl-sn-glycero-3-phosphocholine + a fatty acid + H(+). PLA2 catalyzes the calcium-dependent hydrolysis of the 2-acyl groups in 3-sn-phosphoglycerides. The protein is Phospholipase A2 A2-actitoxin-Ucs2a of Urticina crassicornis (Mottled anemone).